The sequence spans 395 residues: Acetate kinase (395 aa).

Residue Asn-8 coordinates Mg(2+). Lys-15 is an ATP binding site. Arg-94 contacts substrate. Asp-151 (proton donor/acceptor) is an active-site residue. ATP contacts are provided by residues 210 to 214 (HLGNG), 284 to 286 (DMR), and 329 to 333 (GIGEN). Glu-382 contributes to the Mg(2+) binding site.

The protein belongs to the acetokinase family. In terms of assembly, homodimer. Mg(2+) is required as a cofactor. Mn(2+) serves as cofactor.

The protein localises to the cytoplasm. The enzyme catalyses acetate + ATP = acetyl phosphate + ADP. Its pathway is metabolic intermediate biosynthesis; acetyl-CoA biosynthesis; acetyl-CoA from acetate: step 1/2. Functionally, catalyzes the formation of acetyl phosphate from acetate and ATP. Can also catalyze the reverse reaction. The chain is Acetate kinase from Protochlamydia amoebophila (strain UWE25).